The chain runs to 422 residues: Serine--tRNA ligase (422 aa).

229–231 (TAE) is an L-serine binding site. 260-262 (RAE) is a binding site for ATP. L-serine is bound at residue Glu-283. Residue 347 to 350 (EISS) coordinates ATP. Position 383 (Ser-383) interacts with L-serine.

It belongs to the class-II aminoacyl-tRNA synthetase family. Type-1 seryl-tRNA synthetase subfamily. As to quaternary structure, homodimer. The tRNA molecule binds across the dimer.

It localises to the cytoplasm. The catalysed reaction is tRNA(Ser) + L-serine + ATP = L-seryl-tRNA(Ser) + AMP + diphosphate + H(+). The enzyme catalyses tRNA(Sec) + L-serine + ATP = L-seryl-tRNA(Sec) + AMP + diphosphate + H(+). Its pathway is aminoacyl-tRNA biosynthesis; selenocysteinyl-tRNA(Sec) biosynthesis; L-seryl-tRNA(Sec) from L-serine and tRNA(Sec): step 1/1. In terms of biological role, catalyzes the attachment of serine to tRNA(Ser). Is also able to aminoacylate tRNA(Sec) with serine, to form the misacylated tRNA L-seryl-tRNA(Sec), which will be further converted into selenocysteinyl-tRNA(Sec). The sequence is that of Serine--tRNA ligase from Heliobacterium modesticaldum (strain ATCC 51547 / Ice1).